Consider the following 456-residue polypeptide: Major facilitator superfamily domain-containing protein 10 (456 aa).

Helical transmembrane passes span 25–45, 87–107, 125–145, 149–169, 179–199, 204–224, 278–298, 311–328, 343–363, 365–385, and 422–442; these read VVAV…LLLP, VLFG…SAPL, LAGV…AAFL, VIGG…ADLG, AVIG…GAFL, VPWL…CFLP, LVYF…SFLV, KMFF…GAYA, AILL…LPIL, LGLL…SSVV, and LAGA…PFSI.

Belongs to the major facilitator superfamily.

It localises to the nucleus inner membrane. The protein resides in the cell membrane. Probable organic anion transporter which may serve as a transporter for some non-steroidal anti-inflammatory drugs (NSAIDs) as well as other organic anions across the luminal membranes of renal proximal tubules at the final excretion step into the urine. The sequence is that of Major facilitator superfamily domain-containing protein 10 (MFSD10) from Bos taurus (Bovine).